The following is a 650-amino-acid chain: ATP-binding cassette sub-family G member 3 (650 aa).

Topologically, residues 1–387 (MASNNDPTVI…KNFKGFPWVT (387 aa)) are cytoplasmic. In terms of domain architecture, ABC transporter spans 37-279 (LSFHNISYQE…FRSAGYNYES (243 aa)). Residues 381–644 (KGFPWVTVIQ…TITYVQLLQV (264 aa)) enclose the ABC transmembrane type-2 domain. A helical membrane pass occupies residues 388–408 (VIQAIITVILATAVGTAFRVL). Topologically, residues 409-420 (KNDCIEVQMRAG) are extracellular. The chain crosses the membrane as a helical span at residues 421-441 (LLYLLTIFQCITSVSAGELFV). Residues 442–469 (IDRVRFLHEHTSGYYRVSSYFFGKLLAE) are Cytoplasmic-facing. A helical membrane pass occupies residues 470 to 490 (LIPRRLLPSTVFSLITYVIAG). Topologically, residues 491–498 (VKMSMKCF) are extracellular. A helical membrane pass occupies residues 499–519 (FTMICTIMVLAYSASSLPLSI). Over 520–527 (GAGENAVA) the chain is Cytoplasmic. The chain crosses the membrane as a helical span at residues 528 to 548 (VPTLLVTIYFVFMLFFSGLSL). Residues 549-623 (YSGSFLPKLS…LSSWGFWENH (75 aa)) are Extracellular-facing. Residues 624 to 644 (LALVCTMIILLTITYVQLLQV) form a helical membrane-spanning segment. The Cytoplasmic segment spans residues 645–648 (KNIR).

It belongs to the ABC transporter superfamily. ABCG family. Eye pigment precursor importer (TC 3.A.1.204) subfamily. May dimerize with another subunit to form a functional transporter. As to expression, highest levels of expression in thymus and spleen. Detected in lung and small intestine.

It is found in the membrane. This Mus musculus (Mouse) protein is ATP-binding cassette sub-family G member 3 (Abcg3).